Reading from the N-terminus, the 395-residue chain is Argininosuccinate synthase (395 aa).

ATP contacts are provided by residues 9–17 (AYSGGLDTS) and Ala-37. Positions 87 and 92 each coordinate L-citrulline. Position 117 (Gly-117) interacts with ATP. Residues Thr-119, Asn-123, and Asp-124 each coordinate L-aspartate. Asn-123 contributes to the L-citrulline binding site. 5 residues coordinate L-citrulline: Arg-127, Ser-173, Ser-182, Glu-258, and Tyr-270.

The protein belongs to the argininosuccinate synthase family. Type 1 subfamily. In terms of assembly, homotetramer.

It localises to the cytoplasm. It catalyses the reaction L-citrulline + L-aspartate + ATP = 2-(N(omega)-L-arginino)succinate + AMP + diphosphate + H(+). It participates in amino-acid biosynthesis; L-arginine biosynthesis; L-arginine from L-ornithine and carbamoyl phosphate: step 2/3. In Methanospirillum hungatei JF-1 (strain ATCC 27890 / DSM 864 / NBRC 100397 / JF-1), this protein is Argininosuccinate synthase.